A 217-amino-acid polypeptide reads, in one-letter code: Ras-related protein RGP2 (217 aa).

GTP is bound by residues 19–26, 67–71, and 125–128; these read GDSGVGKS, DTAGQ, and NKSD. S-geranylgeranyl cysteine attachment occurs at residues C214 and C215.

Belongs to the small GTPase superfamily. Rab family.

The protein localises to the cell membrane. This chain is Ras-related protein RGP2 (RGP2), found in Oryza sativa subsp. japonica (Rice).